The sequence spans 242 residues: Protein HTATIP2 (242 aa).

At alanine 2 the chain carries N-acetylalanine. The required for interaction with elongation factor EEF1A1 stretch occupies residues 2–25 (AETEALSKLREDFRMQNKSVFILG). The NADPH site is built by serine 27, glycine 28, glutamate 29, threonine 30, arginine 52, arginine 53, leucine 92, glycine 93, tyrosine 143, lysine 147, leucine 170, and arginine 178. Tyrosine 143 functions as the Proton acceptor in the catalytic mechanism. Lysine 147 is an active-site residue.

Monomer. Forms homodimers during oxidative stress. Interacts (via N-terminus) with elongation factor EEF1A1 (via middle-region); the interaction is direct and competes with EEF1A1 binding to guanyl-nucleotide exchange factor EEF1B2, thereby inhibiting GDP for GTP exchange and reactivation of EEF1A1. Interacts with nuclear transport receptors XPO4, IPO5/RANBP5, IPO7, IPO9 and KPNB1 as well as GCN1L1/GCN1 and LRPPRC probably through their HEAT repeats. Binds NCOA5/CIA. As to quaternary structure, interacts (via N-terminus) with proteasome subunit PSMD4/s5a. In terms of assembly, (Microbial infection) Interacts with HIV-1 Tat (via activation domain). As to expression, high levels in liver, lung, skeletal muscle, pancreas and placenta. Moderate levels in heart and kidney. Low levels in brain. Not expressed or low levels in variant small cell lung carcinomas, 33% of hepatocellular carcinomas and neuroblastomas. Levels are reduced in the heart of patients with hypertrophic cardiomyopathy and failing hearts.

The protein resides in the cytoplasm. In terms of biological role, represses translation by preventing reactivation of elongation factor eEF1A. May also inhibit nuclear import by competing with nuclear import substrates for binding to a subset of nuclear transport receptors. Has additionally been proposed to act as a redox sensor involved in cellular oxidative stress surveillance. This is Protein HTATIP2 from Homo sapiens (Human).